The chain runs to 988 residues: Mediator of RNA polymerase II transcription subunit 24 (988 aa).

Short sequence motifs (LXXLL motif) lie at residues 128 to 132, 341 to 345, 445 to 449, 555 to 559, 786 to 790, and 856 to 860; these read LNWLL, LTPLL, LDLLL, LVALL, LPSLL, and LMRLL.

This sequence belongs to the Mediator complex subunit 24 family. Component of the Mediator complex.

The protein localises to the nucleus. Component of the Mediator complex, a coactivator involved in the regulated transcription of nearly all RNA polymerase II-dependent genes. Mediator functions as a bridge to convey information from gene-specific regulatory proteins to the basal RNA polymerase II transcription machinery. Mediator is recruited to promoters by direct interactions with regulatory proteins and serves as a scaffold for the assembly of a functional preinitiation complex with RNA polymerase II and the general transcription factors. This chain is Mediator of RNA polymerase II transcription subunit 24 (med24), found in Xenopus laevis (African clawed frog).